The following is a 253-amino-acid chain: Triosephosphate isomerase, cytosolic (253 aa).

Residues Asn-10 and Lys-12 each contribute to the substrate site. His-96 (electrophile) is an active-site residue. The active-site Proton acceptor is the Glu-166.

This sequence belongs to the triosephosphate isomerase family. Homodimer.

Its subcellular location is the cytoplasm. It carries out the reaction D-glyceraldehyde 3-phosphate = dihydroxyacetone phosphate. The protein operates within carbohydrate biosynthesis; gluconeogenesis. It participates in carbohydrate degradation; glycolysis; D-glyceraldehyde 3-phosphate from glycerone phosphate: step 1/1. The protein is Triosephosphate isomerase, cytosolic (TPI) of Oryza sativa subsp. japonica (Rice).